Here is a 944-residue protein sequence, read N- to C-terminus: Leucine--tRNA ligase 2 (944 aa).

The 'HIGH' region motif lies at 36–46; that stretch reads PYPNSPFHLGH. Residues 621–625 carry the 'KMSKS' region motif; the sequence is KMSKS. Lys-624 contributes to the ATP binding site.

The protein belongs to the class-I aminoacyl-tRNA synthetase family.

The protein localises to the cytoplasm. It catalyses the reaction tRNA(Leu) + L-leucine + ATP = L-leucyl-tRNA(Leu) + AMP + diphosphate. The protein is Leucine--tRNA ligase 2 of Sulfurisphaera tokodaii (strain DSM 16993 / JCM 10545 / NBRC 100140 / 7) (Sulfolobus tokodaii).